Reading from the N-terminus, the 707-residue chain is Protein kinase C theta type (707 aa).

The region spanning 1–107 is the C2 domain; sequence MSPFLRIGLS…KNNGRTEIWL (107 aa). Tyr90 is subject to Phosphotyrosine; by LCK. Residues 159–209 form a Phorbol-ester/DAG-type 1 zinc finger; the sequence is CHEFTATFFPQPTFCSVCHEFVWGLNKQGYQCRRCNAAIHKKCIDKVIAKC. Phosphothreonine; by autocatalysis is present on Thr219. Residues 231-281 form a Phorbol-ester/DAG-type 2 zinc finger; sequence PHRFKVYNYKSPTFCEHCGTLLWGLARQGLKCDACGMNVHHRCQTKVANLC. Ser348 is subject to Phosphoserine. The Protein kinase domain occupies 380–634; the sequence is FILHKMLGKG…RGDIRQHPLF (255 aa). Residues 386–394 and Lys409 contribute to the ATP site; that span reads LGKGSFGKV. The Proton acceptor role is filled by Asp504. Phosphothreonine; by PDPK1 is present on Thr538. An AGC-kinase C-terminal domain is found at 635 to 706; the sequence is REINWEELER…INPGMETLIC (72 aa). 2 positions are modified to phosphoserine: Ser676 and Ser685. Ser695 is modified (phosphoserine; by autocatalysis).

This sequence belongs to the protein kinase superfamily. AGC Ser/Thr protein kinase family. PKC subfamily. In terms of assembly, part of a membrane raft complex composed at least of BCL10, CARD11, MALT1 and IKBKB. Interacts with GLRX3 (via N-terminus). Interacts with ECT2. Interacts with CCDC88A/GIV; the interaction leads to phosphorylation of CCDC88A and inhibition of its guanine nucleotide exchange factor activity. Interacts with CD28. Requires Mg(2+) as cofactor. Autophosphorylation at Thr-219 is required for targeting to the TCR and cellular function of PRKCQ upon antigen receptor ligation. Following TCR stimulation, phosphorylated at Tyr-90 and Ser-685.

It is found in the cytoplasm. Its subcellular location is the cell membrane. The enzyme catalyses L-seryl-[protein] + ATP = O-phospho-L-seryl-[protein] + ADP + H(+). It carries out the reaction L-threonyl-[protein] + ATP = O-phospho-L-threonyl-[protein] + ADP + H(+). Its activity is regulated as follows. Novel PKCs (PRKCD, PRKCE, PRKCH and PRKCQ) are calcium-insensitive, but activated by diacylglycerol (DAG) and phosphatidylserine. Three specific sites; Thr-538 (activation loop of the kinase domain), Ser-676 (turn motif) and Ser-695 (hydrophobic region), need to be phosphorylated for its full activation. Its function is as follows. Calcium-independent, phospholipid- and diacylglycerol (DAG)-dependent serine/threonine-protein kinase that mediates non-redundant functions in T-cell receptor (TCR) signaling, including T-cells activation, proliferation, differentiation and survival, by mediating activation of multiple transcription factors such as NF-kappa-B, JUN, NFATC1 and NFATC2. In TCR-CD3/CD28-co-stimulated T-cells, is required for the activation of NF-kappa-B and JUN, which in turn are essential for IL2 production, and participates in the calcium-dependent NFATC1 and NFATC2 transactivation. Mediates the activation of the canonical NF-kappa-B pathway (NFKB1) by direct phosphorylation of CARD11 on several serine residues, inducing CARD11 association with lipid rafts and recruitment of the BCL10-MALT1 complex, which then activates IKK complex, resulting in nuclear translocation and activation of NFKB1. May also play an indirect role in activation of the non-canonical NF-kappa-B (NFKB2) pathway. In the signaling pathway leading to JUN activation, acts by phosphorylating the mediator STK39/SPAK and may not act through MAP kinases signaling. Plays a critical role in TCR/CD28-induced NFATC1 and NFATC2 transactivation by participating in the regulation of reduced inositol 1,4,5-trisphosphate generation and intracellular calcium mobilization. After costimulation of T-cells through CD28 can phosphorylate CBLB and is required for the ubiquitination and subsequent degradation of CBLB, which is a prerequisite for the activation of TCR. During T-cells differentiation, plays an important role in the development of T-helper 2 (Th2) cells following immune and inflammatory responses, and, in the development of inflammatory autoimmune diseases, is necessary for the activation of IL17-producing Th17 cells. May play a minor role in Th1 response. Upon TCR stimulation, mediates T-cell protective survival signal by phosphorylating BAD, thus protecting T-cells from BAD-induced apoptosis, and by up-regulating BCL-X(L)/BCL2L1 levels through NF-kappa-B and JUN pathways. In platelets, regulates signal transduction downstream of the ITGA2B, CD36/GP4, F2R/PAR1 and F2RL3/PAR4 receptors, playing a positive role in 'outside-in' signaling and granule secretion signal transduction. May relay signals from the activated ITGA2B receptor by regulating the uncoupling of WASP and WIPF1, thereby permitting the regulation of actin filament nucleation and branching activity of the Arp2/3 complex. May mediate inhibitory effects of free fatty acids on insulin signaling by phosphorylating IRS1, which in turn blocks IRS1 tyrosine phosphorylation and downstream activation of the PI3K/AKT pathway. Phosphorylates MSN (moesin) in the presence of phosphatidylglycerol or phosphatidylinositol. Phosphorylates PDPK1 at 'Ser-504' and 'Ser-532' and negatively regulates its ability to phosphorylate PKB/AKT1. Phosphorylates CCDC88A/GIV and inhibits its guanine nucleotide exchange factor activity. Phosphorylates and activates LRRK1, which phosphorylates RAB proteins involved in intracellular trafficking. This chain is Protein kinase C theta type (Prkcq), found in Rattus norvegicus (Rat).